The sequence spans 1342 residues: DNA-directed RNA polymerase subunit beta (1342 aa).

Belongs to the RNA polymerase beta chain family. In terms of assembly, the RNAP catalytic core consists of 2 alpha, 1 beta, 1 beta' and 1 omega subunit. When a sigma factor is associated with the core the holoenzyme is formed, which can initiate transcription.

The enzyme catalyses RNA(n) + a ribonucleoside 5'-triphosphate = RNA(n+1) + diphosphate. DNA-dependent RNA polymerase catalyzes the transcription of DNA into RNA using the four ribonucleoside triphosphates as substrates. The chain is DNA-directed RNA polymerase subunit beta from Pectobacterium carotovorum subsp. carotovorum (strain PC1).